The chain runs to 318 residues: Melanoma-associated antigen 8 (318 aa).

Positions 1–103 are disordered; that stretch reads MLLGQKSQRY…GPSTSPDPAH (103 aa). An MAGE domain is found at 112-311; it reads LDEKVAELVR…ISYPSLHEEA (200 aa).

In terms of tissue distribution, expressed in many tumors of several types, such as melanoma, head and neck squamous cell carcinoma, lung carcinoma and breast carcinoma, but not in normal tissues except for testis and placenta.

Not known, though may play a role in embryonal development and tumor transformation or aspects of tumor progression. The sequence is that of Melanoma-associated antigen 8 (MAGEA8) from Homo sapiens (Human).